The primary structure comprises 529 residues: Na(+)/H(+) antiporter NhaB (529 aa).

12 helical membrane passes run 13-33 (FLGK…IINP), 34-54 (IVFF…EFIF), 90-110 (LVAN…IYFM), 113-133 (LLLF…ILSL), 149-166 (LTVI…YSIY), 205-225 (LLMH…VGEP), 241-261 (FLIR…LTCF), 306-326 (GLIA…VGLI), 327-347 (GLSV…HSLG), 351-371 (EEAL…AVII), 451-471 (ATPN…APLI), and 479-499 (VIMA…GIVF).

The protein belongs to the NhaB Na(+)/H(+) (TC 2.A.34) antiporter family.

Its subcellular location is the cell inner membrane. It carries out the reaction 2 Na(+)(in) + 3 H(+)(out) = 2 Na(+)(out) + 3 H(+)(in). Na(+)/H(+) antiporter that extrudes sodium in exchange for external protons. The chain is Na(+)/H(+) antiporter NhaB from Vibrio vulnificus (strain YJ016).